A 45-amino-acid polypeptide reads, in one-letter code: Globin, minor monomeric component (45 aa).

Residues 1–45 enclose the Globin domain; that stretch reads GLSAAERQVVASCWKDIAGADXGAGVGKEXLIKFISAAPEMAAVF.

This sequence belongs to the globin family. In terms of assembly, monomer.

The polypeptide is Globin, minor monomeric component (Glycera dibranchiata (Bloodworm)).